Reading from the N-terminus, the 215-residue chain is Orotate phosphoribosyltransferase (215 aa).

Position 26 (K26) interacts with 5-phospho-alpha-D-ribose 1-diphosphate. 34-35 (FF) is a binding site for orotate. Residues 72–73 (YK), R99, K100, K103, H105, and 124–132 (DDVITAGTA) each bind 5-phospho-alpha-D-ribose 1-diphosphate. Orotate is bound by residues T128 and R156.

The protein belongs to the purine/pyrimidine phosphoribosyltransferase family. PyrE subfamily. In terms of assembly, homodimer. Requires Mg(2+) as cofactor.

It catalyses the reaction orotidine 5'-phosphate + diphosphate = orotate + 5-phospho-alpha-D-ribose 1-diphosphate. The protein operates within pyrimidine metabolism; UMP biosynthesis via de novo pathway; UMP from orotate: step 1/2. Functionally, catalyzes the transfer of a ribosyl phosphate group from 5-phosphoribose 1-diphosphate to orotate, leading to the formation of orotidine monophosphate (OMP). The protein is Orotate phosphoribosyltransferase of Cellvibrio japonicus (strain Ueda107) (Pseudomonas fluorescens subsp. cellulosa).